The sequence spans 134 residues: Holo-[acyl-carrier-protein] synthase (134 aa).

Positions 8 and 57 each coordinate Mg(2+).

Belongs to the P-Pant transferase superfamily. AcpS family. Mg(2+) serves as cofactor.

Its subcellular location is the cytoplasm. It carries out the reaction apo-[ACP] + CoA = holo-[ACP] + adenosine 3',5'-bisphosphate + H(+). Functionally, transfers the 4'-phosphopantetheine moiety from coenzyme A to a Ser of acyl-carrier-protein. In Rhizobium leguminosarum bv. trifolii (strain WSM2304), this protein is Holo-[acyl-carrier-protein] synthase.